The sequence spans 347 residues: 3-isopropylmalate dehydrogenase (347 aa).

Residues R95, R105, R129, and D220 each contribute to the substrate site. The Mg(2+) site is built by D220, D244, and D248. 280 to 292 (GSAPDIAGQGKAD) provides a ligand contact to NAD(+).

It belongs to the isocitrate and isopropylmalate dehydrogenases family. LeuB type 2 subfamily. Homodimer. It depends on Mg(2+) as a cofactor. Mn(2+) serves as cofactor.

Its subcellular location is the cytoplasm. It catalyses the reaction (2R,3S)-3-isopropylmalate + NAD(+) = 4-methyl-2-oxopentanoate + CO2 + NADH. The protein operates within amino-acid biosynthesis; L-leucine biosynthesis; L-leucine from 3-methyl-2-oxobutanoate: step 3/4. In terms of biological role, catalyzes the oxidation of 3-carboxy-2-hydroxy-4-methylpentanoate (3-isopropylmalate) to 3-carboxy-4-methyl-2-oxopentanoate. The product decarboxylates to 4-methyl-2 oxopentanoate. The protein is 3-isopropylmalate dehydrogenase of Beutenbergia cavernae (strain ATCC BAA-8 / DSM 12333 / CCUG 43141 / JCM 11478 / NBRC 16432 / NCIMB 13614 / HKI 0122).